The chain runs to 316 residues: Ribosomal RNA small subunit methyltransferase H (316 aa).

S-adenosyl-L-methionine contacts are provided by residues 35–37 (GGH), Asp-55, Phe-79, Asp-101, and Gln-108.

The protein belongs to the methyltransferase superfamily. RsmH family.

It localises to the cytoplasm. The enzyme catalyses cytidine(1402) in 16S rRNA + S-adenosyl-L-methionine = N(4)-methylcytidine(1402) in 16S rRNA + S-adenosyl-L-homocysteine + H(+). In terms of biological role, specifically methylates the N4 position of cytidine in position 1402 (C1402) of 16S rRNA. The chain is Ribosomal RNA small subunit methyltransferase H from Vibrio vulnificus (strain CMCP6).